A 1105-amino-acid chain; its full sequence is Integrator complex subunit 2 (1105 aa).

A helical transmembrane segment spans residues 822–842 (FVFCSPYLLMILLRILKGSLA).

The protein belongs to the Integrator subunit 2 family. In terms of assembly, belongs to the multiprotein complex Integrator, at least composed of IntS1, IntS2, IntS3, IntS4, omd/IntS5, IntS6, defl/IntS7, IntS8, IntS9, IntS10, IntS11, IntS12, asun/IntS13, IntS14 and IntS15. The core complex associates with protein phosphatase 2A subunits mts/PP2A and Pp2A-29B, to form the Integrator-PP2A (INTAC) complex.

It localises to the nucleus membrane. It is found in the nucleus. Its function is as follows. Component of the integrator complex, a multiprotein complex that terminates RNA polymerase II (Pol II) transcription in the promoter-proximal region of genes. The integrator complex provides a quality checkpoint during transcription elongation by driving premature transcription termination of transcripts that are unfavorably configured for transcriptional elongation: the complex terminates transcription by (1) catalyzing dephosphorylation of the C-terminal domain (CTD) of Pol II subunit Polr2A/Rbp1 and Spt5, and (2) degrading the exiting nascent RNA transcript via endonuclease activity. The integrator complex is also involved in the 3'-end processing of the U7 snRNA, and also the spliceosomal snRNAs U1, U2, U4 and U5. This chain is Integrator complex subunit 2, found in Drosophila melanogaster (Fruit fly).